Consider the following 175-residue polypeptide: ATP synthase subunit b 2 (175 aa).

The chain crosses the membrane as a helical span at residues leucine 20–tryptophan 40.

It belongs to the ATPase B chain family. As to quaternary structure, F-type ATPases have 2 components, F(1) - the catalytic core - and F(0) - the membrane proton channel. F(1) has five subunits: alpha(3), beta(3), gamma(1), delta(1), epsilon(1). F(0) has four main subunits: a(1), b(2) and c(10-14). The alpha and beta chains form an alternating ring which encloses part of the gamma chain. F(1) is attached to F(0) by a central stalk formed by the gamma and epsilon chains, while a peripheral stalk is formed by the delta and b chains.

It is found in the cell inner membrane. Functionally, f(1)F(0) ATP synthase produces ATP from ADP in the presence of a proton or sodium gradient. F-type ATPases consist of two structural domains, F(1) containing the extramembraneous catalytic core and F(0) containing the membrane proton channel, linked together by a central stalk and a peripheral stalk. During catalysis, ATP synthesis in the catalytic domain of F(1) is coupled via a rotary mechanism of the central stalk subunits to proton translocation. Component of the F(0) channel, it forms part of the peripheral stalk, linking F(1) to F(0). This is ATP synthase subunit b 2 from Chlorobium luteolum (strain DSM 273 / BCRC 81028 / 2530) (Pelodictyon luteolum).